The chain runs to 240 residues: Uridylate kinase (240 aa).

12–15 (KISG) lines the ATP pocket. The tract at residues 20–25 (GNQGFG) is involved in allosteric activation by GTP. Gly54 serves as a coordination point for UMP. Residues Gly55 and Arg59 each coordinate ATP. Residues Asp74 and 135–142 (TGNPYFST) contribute to the UMP site. Residues Tyr168 and Asp171 each contribute to the ATP site.

Belongs to the UMP kinase family. As to quaternary structure, homohexamer.

It localises to the cytoplasm. The catalysed reaction is UMP + ATP = UDP + ADP. Its pathway is pyrimidine metabolism; CTP biosynthesis via de novo pathway; UDP from UMP (UMPK route): step 1/1. With respect to regulation, allosterically activated by GTP. Inhibited by UTP. Functionally, catalyzes the reversible phosphorylation of UMP to UDP. This chain is Uridylate kinase, found in Moorella thermoacetica (strain ATCC 39073 / JCM 9320).